A 213-amino-acid chain; its full sequence is Ras-related protein RabK1 (213 aa).

14-21 contributes to the GTP binding site; that stretch reads GDRMVGKL. The Effector region signature appears at 36 to 43; the sequence is GNSIPFDF. Residues 61–65 and 119–122 each bind GTP; these read NTHGS and TKSD.

Belongs to the small GTPase superfamily. Rab family.

The chain is Ras-related protein RabK1 (rabK1) from Dictyostelium discoideum (Social amoeba).